The following is a 134-amino-acid chain: Small ribosomal subunit protein uS8c (134 aa).

Belongs to the universal ribosomal protein uS8 family. Part of the 30S ribosomal subunit.

The protein localises to the plastid. It is found in the chloroplast. Functionally, one of the primary rRNA binding proteins, it binds directly to 16S rRNA central domain where it helps coordinate assembly of the platform of the 30S subunit. The sequence is that of Small ribosomal subunit protein uS8c (rps8) from Phaseolus vulgaris (Kidney bean).